Reading from the N-terminus, the 262-residue chain is ATP synthase subunit a (262 aa).

5 helical membrane-spanning segments follow: residues alanine 24–phenylalanine 44, isoleucine 85–valine 105, aspartate 129–valine 149, leucine 194–alanine 214, and leucine 228–leucine 248.

The protein belongs to the ATPase A chain family. In terms of assembly, F-type ATPases have 2 components, CF(1) - the catalytic core - and CF(0) - the membrane proton channel. CF(1) has five subunits: alpha(3), beta(3), gamma(1), delta(1), epsilon(1). CF(0) has three main subunits: a(1), b(2) and c(9-12). The alpha and beta chains form an alternating ring which encloses part of the gamma chain. CF(1) is attached to CF(0) by a central stalk formed by the gamma and epsilon chains, while a peripheral stalk is formed by the delta and b chains.

The protein localises to the cell inner membrane. Its function is as follows. Key component of the proton channel; it plays a direct role in the translocation of protons across the membrane. In Haemophilus ducreyi (strain 35000HP / ATCC 700724), this protein is ATP synthase subunit a.